A 450-amino-acid chain; its full sequence is ATP-dependent protease ATPase subunit HslU (450 aa).

ATP is bound by residues Ile18 and 60–65; that span reads GVGKTE. Polar residues predominate over residues 140–151; it reads KTSSSGWAQQQE. Residues 140-162 are disordered; sequence KTSSSGWAQQQEETPENDDQRGT. Residues Asp263, Glu328, and Arg400 each coordinate ATP.

It belongs to the ClpX chaperone family. HslU subfamily. A double ring-shaped homohexamer of HslV is capped on each side by a ring-shaped HslU homohexamer. The assembly of the HslU/HslV complex is dependent on binding of ATP.

Its subcellular location is the cytoplasm. Functionally, ATPase subunit of a proteasome-like degradation complex; this subunit has chaperone activity. The binding of ATP and its subsequent hydrolysis by HslU are essential for unfolding of protein substrates subsequently hydrolyzed by HslV. HslU recognizes the N-terminal part of its protein substrates and unfolds these before they are guided to HslV for hydrolysis. This chain is ATP-dependent protease ATPase subunit HslU, found in Idiomarina loihiensis (strain ATCC BAA-735 / DSM 15497 / L2-TR).